A 164-amino-acid polypeptide reads, in one-letter code: GTP-dependent dephospho-CoA kinase (164 aa).

D40, V41, V42, D59, K61, and E113 together coordinate GTP.

This sequence belongs to the GTP-dependent DPCK family.

It catalyses the reaction 3'-dephospho-CoA + GTP = GDP + CoA + H(+). Its pathway is cofactor biosynthesis; coenzyme A biosynthesis. Functionally, catalyzes the GTP-dependent phosphorylation of the 3'-hydroxyl group of dephosphocoenzyme A to form coenzyme A (CoA). This chain is GTP-dependent dephospho-CoA kinase, found in Sulfolobus acidocaldarius (strain ATCC 33909 / DSM 639 / JCM 8929 / NBRC 15157 / NCIMB 11770).